A 375-amino-acid chain; its full sequence is Tyrosine--tRNA ligase (375 aa).

L-tyrosine contacts are provided by Y37, Y168, Q172, D175, and Q190. The short motif at 251–255 (KMSKS) is the 'KMSKS' region element. ATP is bound at residue K254.

Belongs to the class-I aminoacyl-tRNA synthetase family. TyrS type 4 subfamily. In terms of assembly, homodimer.

The protein localises to the cytoplasm. It carries out the reaction tRNA(Tyr) + L-tyrosine + ATP = L-tyrosyl-tRNA(Tyr) + AMP + diphosphate + H(+). In terms of biological role, catalyzes the attachment of tyrosine to tRNA(Tyr) in a two-step reaction: tyrosine is first activated by ATP to form Tyr-AMP and then transferred to the acceptor end of tRNA(Tyr). In Pyrococcus furiosus (strain ATCC 43587 / DSM 3638 / JCM 8422 / Vc1), this protein is Tyrosine--tRNA ligase.